Consider the following 147-residue polypeptide: Transthyretin (147 aa).

Positions 1–20 (MASFRLLLLCLAGLVFVSEA) are cleaved as a signal peptide. Residue C30 is modified to Sulfocysteine. L-thyroxine is bound at residue K35. E62 bears the 4-carboxyglutamate mark. S72 bears the Phosphoserine mark. E74 contributes to the L-thyroxine binding site. N118 carries an N-linked (GlcNAc...) asparagine glycan. S137 contacts L-thyroxine.

This sequence belongs to the transthyretin family. As to quaternary structure, homotetramer. Dimer of dimers. In the homotetramer, subunits assemble around a central channel that can accommodate two ligand molecules. Interacts with RBP4. Sulfonation of the reactive cysteine Cys-30 enhances the stability of the native conformation of TTR, avoiding misassembly of the protein leading to amyloid formation. Highly expressed in the choroid plexus.

The protein resides in the secreted. Thyroid hormone-binding protein. Probably transports thyroxine from the bloodstream to the brain. The sequence is that of Transthyretin (TTR) from Ovis aries (Sheep).